The primary structure comprises 302 residues: Arginase (302 aa).

Mn(2+)-binding residues include His103, Asp126, His128, and Asp130. Residues 128–132 (HGDLN), 139–141 (SGN), and Asp180 contribute to the substrate site. 2 residues coordinate Mn(2+): Asp229 and Asp231. 2 residues coordinate substrate: Thr243 and Glu274.

Belongs to the arginase family. The cofactor is Mn(2+).

The catalysed reaction is L-arginine + H2O = urea + L-ornithine. It functions in the pathway nitrogen metabolism; urea cycle; L-ornithine and urea from L-arginine: step 1/1. This is Arginase (arg) from Staphylococcus aureus (strain MRSA252).